Reading from the N-terminus, the 440-residue chain is Histidinol dehydrogenase (440 aa).

Residues Y133, Q194, and N217 each contribute to the NAD(+) site. Substrate is bound by residues S240, Q262, and H265. Zn(2+) is bound by residues Q262 and H265. Residues E330 and H331 each act as proton acceptor in the active site. The substrate site is built by H331, D364, E418, and H423. Position 364 (D364) interacts with Zn(2+). Zn(2+) is bound at residue H423.

It belongs to the histidinol dehydrogenase family. It depends on Zn(2+) as a cofactor.

The enzyme catalyses L-histidinol + 2 NAD(+) + H2O = L-histidine + 2 NADH + 3 H(+). It functions in the pathway amino-acid biosynthesis; L-histidine biosynthesis; L-histidine from 5-phospho-alpha-D-ribose 1-diphosphate: step 9/9. Catalyzes the sequential NAD-dependent oxidations of L-histidinol to L-histidinaldehyde and then to L-histidine. The sequence is that of Histidinol dehydrogenase from Nitrosospira multiformis (strain ATCC 25196 / NCIMB 11849 / C 71).